Consider the following 277-residue polypeptide: Large ribosomal subunit protein uL2c (277 aa).

A disordered region spans residues 226–249 (NPIDHPHGGGEGRAPIGREKPLTP). The segment covering 229–246 (DHPHGGGEGRAPIGREKP) has biased composition (basic and acidic residues).

This sequence belongs to the universal ribosomal protein uL2 family. In terms of assembly, part of the 50S ribosomal subunit.

It localises to the plastid. The protein localises to the chloroplast. This Physcomitrium patens (Spreading-leaved earth moss) protein is Large ribosomal subunit protein uL2c (rpl2).